The following is a 155-amino-acid chain: 3-hydroxyacyl-[acyl-carrier-protein] dehydratase FabZ (155 aa).

Residue histidine 58 is part of the active site.

The protein belongs to the thioester dehydratase family. FabZ subfamily.

It localises to the cytoplasm. The enzyme catalyses a (3R)-hydroxyacyl-[ACP] = a (2E)-enoyl-[ACP] + H2O. In terms of biological role, involved in unsaturated fatty acids biosynthesis. Catalyzes the dehydration of short chain beta-hydroxyacyl-ACPs and long chain saturated and unsaturated beta-hydroxyacyl-ACPs. The sequence is that of 3-hydroxyacyl-[acyl-carrier-protein] dehydratase FabZ from Rhizobium johnstonii (strain DSM 114642 / LMG 32736 / 3841) (Rhizobium leguminosarum bv. viciae).